The chain runs to 387 residues: Patatin-05 (387 aa).

An N-terminal signal peptide occupies residues 1–23 (MATTKSVLVLIFMILATTSSTFA). One can recognise a PNPLA domain in the interval 32–230 (LSIDGGGIKG…TVADPALLSV (199 aa)). Residues 36-41 (GGGIKG) carry the GXGXXG motif. Positions 75-79 (GTSTG) match the GXSXG motif. Ser77 (nucleophile) is an active-site residue. Residues Asn115 and Asn203 are each glycosylated (N-linked (GlcNAc...) asparagine). Catalysis depends on Asp216, which acts as the Proton acceptor. A DGA/G motif is present at residues 216-218 (DGA).

The protein belongs to the patatin family. Tuber.

It is found in the vacuole. Its function is as follows. Probable lipolytic acyl hydrolase (LAH), an activity which is thought to be involved in the response of tubers to pathogens. The chain is Patatin-05 (pat1-k1) from Solanum tuberosum (Potato).